Reading from the N-terminus, the 76-residue chain is Small ribosomal subunit protein bS18 (76 aa).

Belongs to the bacterial ribosomal protein bS18 family. Part of the 30S ribosomal subunit. Forms a tight heterodimer with protein bS6.

Functionally, binds as a heterodimer with protein bS6 to the central domain of the 16S rRNA, where it helps stabilize the platform of the 30S subunit. This chain is Small ribosomal subunit protein bS18, found in Pelotomaculum thermopropionicum (strain DSM 13744 / JCM 10971 / SI).